A 178-amino-acid chain; its full sequence is Interleukin-10 (178 aa).

A signal peptide spans Met1–Ala18. Residue Asn29 is glycosylated (N-linked (GlcNAc...) asparagine). Cystine bridges form between Cys30–Cys126 and Cys80–Cys132. Residue Asn134 is glycosylated (N-linked (GlcNAc...) asparagine).

It belongs to the IL-10 family. As to quaternary structure, homodimer. Interacts with IL10RA and IL10RB.

It is found in the secreted. In terms of biological role, major immune regulatory cytokine that acts on many cells of the immune system where it has profound anti-inflammatory functions, limiting excessive tissue disruption caused by inflammation. Mechanistically, IL10 binds to its heterotetrameric receptor comprising IL10RA and IL10RB leading to JAK1 and STAT2-mediated phosphorylation of STAT3. In turn, STAT3 translocates to the nucleus where it drives expression of anti-inflammatory mediators. Targets antigen-presenting cells (APCs) such as macrophages and monocytes and inhibits their release of pro-inflammatory cytokines including granulocyte-macrophage colony-stimulating factor /GM-CSF, granulocyte colony-stimulating factor/G-CSF, IL-1 alpha, IL-1 beta, IL-6, IL-8 and TNF-alpha. Also interferes with antigen presentation by reducing the expression of MHC-class II and co-stimulatory molecules, thereby inhibiting their ability to induce T cell activation. In addition, controls the inflammatory response of macrophages by reprogramming essential metabolic pathways including mTOR signaling. The chain is Interleukin-10 (IL10) from Felis catus (Cat).